We begin with the raw amino-acid sequence, 503 residues long: tRNA-2-methylthio-N(6)-dimethylallyladenosine synthase (503 aa).

The region spanning 5–121 (RSYEIRTFGC…LPVLLERARH (117 aa)) is the MTTase N-terminal domain. 6 residues coordinate [4Fe-4S] cluster: C14, C50, C84, C158, C162, and C165. The region spanning 144 to 380 (RESAYAGWVS…IALQEEISLA (237 aa)) is the Radical SAM core domain. The TRAM domain maps to 383–453 (RELIGTEVEL…PHHLIADAPV (71 aa)).

Belongs to the methylthiotransferase family. MiaB subfamily. In terms of assembly, monomer. [4Fe-4S] cluster serves as cofactor.

Its subcellular location is the cytoplasm. The catalysed reaction is N(6)-dimethylallyladenosine(37) in tRNA + (sulfur carrier)-SH + AH2 + 2 S-adenosyl-L-methionine = 2-methylsulfanyl-N(6)-dimethylallyladenosine(37) in tRNA + (sulfur carrier)-H + 5'-deoxyadenosine + L-methionine + A + S-adenosyl-L-homocysteine + 2 H(+). Its function is as follows. Catalyzes the methylthiolation of N6-(dimethylallyl)adenosine (i(6)A), leading to the formation of 2-methylthio-N6-(dimethylallyl)adenosine (ms(2)i(6)A) at position 37 in tRNAs that read codons beginning with uridine. The polypeptide is tRNA-2-methylthio-N(6)-dimethylallyladenosine synthase (Nocardia farcinica (strain IFM 10152)).